The primary structure comprises 218 residues: Adenylate kinase (218 aa).

An ATP-binding site is contributed by 10 to 15 (GAGKGT). Residues 30–59 (STGDMLRAAVKAGSPLGLKVKEVMATGGLV) are NMP. AMP is bound by residues Thr31, Arg36, 57–59 (GLV), 85–88 (GFPR), and Gln92. The LID stretch occupies residues 122–159 (GRRVHEASGRVYHVDYNPPKVEGKDDVTGEPLVQREDD). ATP-binding positions include Arg123 and 132–133 (VY). 2 residues coordinate AMP: Arg156 and Arg167. Gly203 contributes to the ATP binding site.

Belongs to the adenylate kinase family. In terms of assembly, monomer.

The protein resides in the cytoplasm. It catalyses the reaction AMP + ATP = 2 ADP. It functions in the pathway purine metabolism; AMP biosynthesis via salvage pathway; AMP from ADP: step 1/1. Its function is as follows. Catalyzes the reversible transfer of the terminal phosphate group between ATP and AMP. Plays an important role in cellular energy homeostasis and in adenine nucleotide metabolism. This is Adenylate kinase from Hahella chejuensis (strain KCTC 2396).